Consider the following 204-residue polypeptide: dITP/XTP pyrophosphatase (204 aa).

T8–K13 contributes to the substrate binding site. The active-site Proton acceptor is D70. Position 70 (D70) interacts with Mg(2+). Residues S71, F153 to D156, K176, and H181 to R182 contribute to the substrate site.

It belongs to the HAM1 NTPase family. In terms of assembly, homodimer. Requires Mg(2+) as cofactor.

The enzyme catalyses XTP + H2O = XMP + diphosphate + H(+). It carries out the reaction dITP + H2O = dIMP + diphosphate + H(+). It catalyses the reaction ITP + H2O = IMP + diphosphate + H(+). Pyrophosphatase that catalyzes the hydrolysis of nucleoside triphosphates to their monophosphate derivatives, with a high preference for the non-canonical purine nucleotides XTP (xanthosine triphosphate), dITP (deoxyinosine triphosphate) and ITP. Seems to function as a house-cleaning enzyme that removes non-canonical purine nucleotides from the nucleotide pool, thus preventing their incorporation into DNA/RNA and avoiding chromosomal lesions. The sequence is that of dITP/XTP pyrophosphatase from Geobacillus kaustophilus (strain HTA426).